A 406-amino-acid chain; its full sequence is Anthranilate 1,2-dioxygenase system ferredoxin--NAD(+) reductase component (406 aa).

Residue Pro5 to Glu37 participates in FAD binding. Residue Gly152–Ala161 participates in NAD(+) binding.

The protein belongs to the FAD-dependent oxidoreductase family. As to quaternary structure, part of a multicomponent enzyme system composed of a reductase (AndAa), a ferredoxin (AndAb) and a two-subunit oxygenase component (AndAc and AndAd). It depends on FAD as a cofactor.

It carries out the reaction 2 reduced [2Fe-2S]-[ferredoxin] + NAD(+) + H(+) = 2 oxidized [2Fe-2S]-[ferredoxin] + NADH. It functions in the pathway aromatic compound metabolism; anthranilate degradation via hydroxylation; catechol from anthranilate: step 1/1. Part of the multicomponent anthranilate dioxygenase, that converts anthranilate to catechol. Probably transfers electrons from ferredoxin (AndAb) to NADH. This chain is Anthranilate 1,2-dioxygenase system ferredoxin--NAD(+) reductase component, found in Burkholderia cepacia (Pseudomonas cepacia).